A 315-amino-acid polypeptide reads, in one-letter code: Homoserine kinase (315 aa).

97–107 lines the ATP pocket; it reads PPARGLGSSAT.

This sequence belongs to the GHMP kinase family. Homoserine kinase subfamily.

Its subcellular location is the cytoplasm. The catalysed reaction is L-homoserine + ATP = O-phospho-L-homoserine + ADP + H(+). The protein operates within amino-acid biosynthesis; L-threonine biosynthesis; L-threonine from L-aspartate: step 4/5. Functionally, catalyzes the ATP-dependent phosphorylation of L-homoserine to L-homoserine phosphate. This is Homoserine kinase from Prochlorococcus marinus (strain NATL2A).